Consider the following 357-residue polypeptide: ATP-dependent 6-phosphofructokinase 2 (357 aa).

Residues G12, K80–G81, and G107–S110 each bind ATP. D108 contacts Mg(2+). Substrate contacts are provided by residues T131 to D133, R168, M175 to R177, E229, R272, and H278 to R281. The Proton acceptor role is filled by D133.

This sequence belongs to the phosphofructokinase type A (PFKA) family. Mixed-substrate PFK group III subfamily. As to quaternary structure, homodimer or homotetramer. Requires Mg(2+) as cofactor.

The protein resides in the cytoplasm. The catalysed reaction is beta-D-fructose 6-phosphate + ATP = beta-D-fructose 1,6-bisphosphate + ADP + H(+). Its pathway is carbohydrate degradation; glycolysis; D-glyceraldehyde 3-phosphate and glycerone phosphate from D-glucose: step 3/4. With respect to regulation, subject to allosteric activation by ADP and other diphosphonucleosides, and inhibition by phosphoenolpyruvate. Its function is as follows. Catalyzes the phosphorylation of D-fructose 6-phosphate to fructose 1,6-bisphosphate by ATP, the first committing step of glycolysis. This chain is ATP-dependent 6-phosphofructokinase 2, found in Nostoc sp. (strain PCC 7120 / SAG 25.82 / UTEX 2576).